The sequence spans 449 residues: tRNA-2-methylthio-N(6)-dimethylallyladenosine synthase (449 aa).

An MTTase N-terminal domain is found at R4 to E119. The [4Fe-4S] cluster site is built by C13, C48, C82, C158, C162, and C165. The region spanning G144–R375 is the Radical SAM core domain. The TRAM domain maps to Q378 to G446.

This sequence belongs to the methylthiotransferase family. MiaB subfamily. Monomer. The cofactor is [4Fe-4S] cluster.

It is found in the cytoplasm. The enzyme catalyses N(6)-dimethylallyladenosine(37) in tRNA + (sulfur carrier)-SH + AH2 + 2 S-adenosyl-L-methionine = 2-methylsulfanyl-N(6)-dimethylallyladenosine(37) in tRNA + (sulfur carrier)-H + 5'-deoxyadenosine + L-methionine + A + S-adenosyl-L-homocysteine + 2 H(+). Catalyzes the methylthiolation of N6-(dimethylallyl)adenosine (i(6)A), leading to the formation of 2-methylthio-N6-(dimethylallyl)adenosine (ms(2)i(6)A) at position 37 in tRNAs that read codons beginning with uridine. The sequence is that of tRNA-2-methylthio-N(6)-dimethylallyladenosine synthase from Nitratidesulfovibrio vulgaris (strain DP4) (Desulfovibrio vulgaris).